The following is a 457-amino-acid chain: Siroheme synthase (457 aa).

Residues 1–204 are precorrin-2 dehydrogenase /sirohydrochlorin ferrochelatase; it reads MDHLPIFCQL…NDQKAITETT (204 aa). NAD(+)-binding positions include 22–23 and 43–44; these read DV and LA. Residue S128 is modified to Phosphoserine. Residues 216–457 are uroporphyrinogen-III C-methyltransferase; that stretch reads GEVVLVGAGP…RDKLNWFSNH (242 aa). P225 provides a ligand contact to S-adenosyl-L-methionine. D248 functions as the Proton acceptor in the catalytic mechanism. Residue K270 is the Proton donor of the active site. S-adenosyl-L-methionine contacts are provided by residues 301-303, I306, 331-332, M382, and G411; these read GGD and TA.

In the N-terminal section; belongs to the precorrin-2 dehydrogenase / sirohydrochlorin ferrochelatase family. The protein in the C-terminal section; belongs to the precorrin methyltransferase family.

The enzyme catalyses uroporphyrinogen III + 2 S-adenosyl-L-methionine = precorrin-2 + 2 S-adenosyl-L-homocysteine + H(+). The catalysed reaction is precorrin-2 + NAD(+) = sirohydrochlorin + NADH + 2 H(+). It carries out the reaction siroheme + 2 H(+) = sirohydrochlorin + Fe(2+). It participates in cofactor biosynthesis; adenosylcobalamin biosynthesis; precorrin-2 from uroporphyrinogen III: step 1/1. Its pathway is cofactor biosynthesis; adenosylcobalamin biosynthesis; sirohydrochlorin from precorrin-2: step 1/1. The protein operates within porphyrin-containing compound metabolism; siroheme biosynthesis; precorrin-2 from uroporphyrinogen III: step 1/1. It functions in the pathway porphyrin-containing compound metabolism; siroheme biosynthesis; siroheme from sirohydrochlorin: step 1/1. It participates in porphyrin-containing compound metabolism; siroheme biosynthesis; sirohydrochlorin from precorrin-2: step 1/1. Multifunctional enzyme that catalyzes the SAM-dependent methylations of uroporphyrinogen III at position C-2 and C-7 to form precorrin-2 via precorrin-1. Then it catalyzes the NAD-dependent ring dehydrogenation of precorrin-2 to yield sirohydrochlorin. Finally, it catalyzes the ferrochelation of sirohydrochlorin to yield siroheme. This chain is Siroheme synthase, found in Escherichia coli O45:K1 (strain S88 / ExPEC).